The sequence spans 434 residues: Cysteine--tRNA ligase (434 aa).

Cysteine 28 is a binding site for Zn(2+). The short motif at 30–40 is the 'HIGH' region element; the sequence is PTVYDDIHIGN. Cysteine 207, histidine 232, and glutamate 236 together coordinate Zn(2+). The 'KMSKS' region signature appears at 264-268; that stretch reads KMSKS. Lysine 267 provides a ligand contact to ATP.

It belongs to the class-I aminoacyl-tRNA synthetase family. In terms of assembly, monomer. It depends on Zn(2+) as a cofactor.

Its subcellular location is the cytoplasm. The catalysed reaction is tRNA(Cys) + L-cysteine + ATP = L-cysteinyl-tRNA(Cys) + AMP + diphosphate. The sequence is that of Cysteine--tRNA ligase from Acholeplasma laidlawii (strain PG-8A).